The sequence spans 789 residues: Trans-4-hydroxy-L-proline dehydratase (789 aa).

Residues 7–663 (ERTKKLREES…IMGASPNGRL (657 aa)) enclose the PFL domain. The Cysteine radical intermediate role is filled by C434. The active-site Proton acceptor is the E436. Residues 670–789 (EGISPEKGGD…EIIGRTEQTF (120 aa)) form the Glycine radical domain. Residue G765 is modified to Glycine radical.

It belongs to the glycyl radical enzyme (GRE) family. HYPD subfamily. In terms of processing, requires the activating protein PflE to generate the key active site glycyl radical on Gly-765 that is involved in catalysis.

It catalyses the reaction trans-4-hydroxy-L-proline = (S)-1-pyrroline-5-carboxylate + H2O + H(+). Glycine radical enzyme that catalyzes the dehydration of the non-proteinogenic amino acid trans-4-hydroxy-L-proline (Hyp) to produce delta(1)-pyrroline-5-carboxylate (P5C). Is involved in the anaerobic degradation of 4-hydroxyproline. The sequence is that of Trans-4-hydroxy-L-proline dehydratase from Clostridioides difficile (Peptoclostridium difficile).